A 196-amino-acid chain; its full sequence is Large ribosomal subunit protein uL6 (196 aa).

The protein belongs to the universal ribosomal protein uL6 family. In terms of assembly, part of the 50S ribosomal subunit.

Its function is as follows. This protein binds to the 23S rRNA, and is important in its secondary structure. It is located near the subunit interface in the base of the L7/L12 stalk, and near the tRNA binding site of the peptidyltransferase center. This is Large ribosomal subunit protein uL6 from Archaeoglobus fulgidus (strain ATCC 49558 / DSM 4304 / JCM 9628 / NBRC 100126 / VC-16).